A 101-amino-acid chain; its full sequence is Hg-scorpine-like-2 (101 aa).

Residues 1–17 (MKLTILILLVITSFCSC) form the signal peptide. The BetaSPN-type CS-alpha/beta domain maps to 60–100 (QQLCMFNKDVAGWCEKSCQQSAHQKGYCHGTKCKCGIPLNY). 3 cysteine pairs are disulfide-bonded: cysteine 63–cysteine 87, cysteine 73–cysteine 92, and cysteine 77–cysteine 94.

The protein belongs to the long chain scorpion toxin family. Class 3 subfamily. Expressed by the venom gland.

It localises to the secreted. Functionally, inhibits voltage-gated potassium channels. This is Hg-scorpine-like-2 from Hoffmannihadrurus gertschi (Scorpion).